Here is a 267-residue protein sequence, read N- to C-terminus: MKKILLTVSLGLALSACATQGTVDKDAQITQDWSVEKLYAEAQDELNSSNYTRAVKLYEILESRFPTSRHARQSQLDTAYAYYKDDEKDKALAAIERFRRLHPQHPNMDYALYLRGLVLFNEDQSFLNKLASQDWSDRDPKANREAYQAFAELVQRFPNSKYAADATARMVKLVDALGGNEMSVARYYMKRGAYIAAANRAQKIIGSYQNTRYVEESLAILELAYQKLGKPQLAADTRRVLETNFPKSPFLTHAWQPDDMPWWRYWH.

A signal peptide spans 1–16 (MKKILLTVSLGLALSA). Cys17 carries N-palmitoyl cysteine lipidation. The S-diacylglycerol cysteine moiety is linked to residue Cys17.

Belongs to the BamD family. Part of the Bam complex.

It localises to the cell outer membrane. In terms of biological role, part of the outer membrane protein assembly complex, which is involved in assembly and insertion of beta-barrel proteins into the outer membrane. Required for efficient transformation of Neisseria meningitidis by species-related DNA. The sequence is that of Outer membrane protein assembly factor BamD from Neisseria meningitidis serogroup A / serotype 4A (strain DSM 15465 / Z2491).